The chain runs to 431 residues: Glutamate-1-semialdehyde 2,1-aminomutase (431 aa).

At K269 the chain carries N6-(pyridoxal phosphate)lysine.

It belongs to the class-III pyridoxal-phosphate-dependent aminotransferase family. HemL subfamily. In terms of assembly, homodimer. Pyridoxal 5'-phosphate is required as a cofactor.

The protein resides in the cytoplasm. It catalyses the reaction (S)-4-amino-5-oxopentanoate = 5-aminolevulinate. The protein operates within porphyrin-containing compound metabolism; protoporphyrin-IX biosynthesis; 5-aminolevulinate from L-glutamyl-tRNA(Glu): step 2/2. It participates in porphyrin-containing compound metabolism; chlorophyll biosynthesis. This is Glutamate-1-semialdehyde 2,1-aminomutase from Chlorobium phaeobacteroides (strain BS1).